Here is a 416-residue protein sequence, read N- to C-terminus: Succinate--CoA ligase [ADP-forming] subunit beta (416 aa).

A hydrogenosome-targeting transit peptide spans 1–14; sequence MLRMAPKTVGAVRN. ATP contacts are provided by residues Lys-64, 71–73, and Glu-132; that span reads GRG. Positions 224 and 242 each coordinate Mg(2+). Residues Asn-293 and 350–352 contribute to the substrate site; that span reads GIM.

It belongs to the succinate/malate CoA ligase beta subunit family. Heterodimer of an alpha and a beta subunit. The cofactor is Mg(2+).

The protein resides in the hydrogenosome. It catalyses the reaction succinate + ATP + CoA = succinyl-CoA + ADP + phosphate. It functions in the pathway carbohydrate metabolism; tricarboxylic acid cycle; succinate from succinyl-CoA (ligase route): step 1/1. Its function is as follows. Succinyl-CoA synthetase functions in the citric acid cycle (TCA), coupling the hydrolysis of succinyl-CoA to the synthesis of ATP and thus represents the only step of substrate-level phosphorylation in the TCA. The beta subunit provides nucleotide specificity of the enzyme and binds the substrate succinate, while the binding sites for coenzyme A and phosphate are found in the alpha subunit. This is Succinate--CoA ligase [ADP-forming] subunit beta (SCSb) from Blastocystis sp. subtype 1 (strain ATCC 50177 / NandII).